Here is an 812-residue protein sequence, read N- to C-terminus: MLMTTTTIAMSLSHDVIIAAAQRAARAIPPLWPLASSVAVNPFLGQASEPLEVAAARLRRASGIAVTMPRSWYAERLQSGEITEDDLQAAFQTAPAARRPPNVSALKHAIKVARPAPQAIPTVAELARDVTAIDWPGIVNERIGHWAAGYFDQGQALWAVGQSGGAYSTWRIIATHDLTPEIAGLAGFSQSVSDAPATAEDALVDCVARLGLSPDALDGYFHRLLTTLGGWGQVARYRLWQAELNGGTDACVTDLLAIRMLWEAALLHNGGSALVPGWQSAIAAYAAPVAASSDDVVDSILQEAAERAAQRKLNTVLAAPSSARLSRGRLTLQMAFCIDVRSEVFRRALESLDSGITTLGFAGFFGFGIGHRRFASDVVEARLPVLLSPGVVTCAGEPTPAANAAELSARITARAKRAWGRFKLAAISSFAFVEATGPIYIAKLLRDGLALARHHAPTDPAPRPAHELDLDTRLTMAARILKAMSFTSNFARLVVLAGHGAKVVNNPHASALHCGACGGYSGEVNARLLASLLNDHQVRAGLAERGIVIPADTLFLAALHDTTTDAVTLFADDHPSPTHAQDLAQVTQWLAAAGALARGERALRLPRANRSQDIAHRARDWAEIRPEWALAGCQAFIAAPRSRSAGRDLAGRAFLHDYDWRCDHGFGVLELILTAPVVVASWISLQYYGSTVAPERFGAGNKLLHNVTGGIGVVEGNGGILRTGLPWQSVHDGERLIHEPLRLSVLIEAPTEAIGAILERHPQLRALFDNRWLHLFALDDEGRMARRYIGDLSWETYVGDASSQSNRASTLA.

Residues Cys337, Asp339, His499, and Cys514 each contribute to the Zn(2+) site.

The protein belongs to the inorganic carbon transporter (TC 9.A.2) DabA family. In terms of assembly, forms a complex with DabB. The cofactor is Zn(2+).

Its subcellular location is the cell inner membrane. Functionally, part of an energy-coupled inorganic carbon pump. The polypeptide is Probable inorganic carbon transporter subunit DabA (Xanthomonas oryzae pv. oryzae (strain MAFF 311018)).